We begin with the raw amino-acid sequence, 254 residues long: Probable glucose-1-phosphate cytidylyltransferase (254 aa).

Substrate-binding positions include L6–K10, G11–R13, K23, T103, R108, and G126. D127 and D232 together coordinate Mg(2+).

This sequence belongs to the glucose-1-phosphate cytidylyltransferase family. Mg(2+) serves as cofactor.

It catalyses the reaction alpha-D-glucose 1-phosphate + CTP + H(+) = CDP-D-glucose + diphosphate. Functionally, catalyzes the transfer of a CMP moiety from CTP to glucose 1-phosphate. The chain is Probable glucose-1-phosphate cytidylyltransferase (yfnH) from Bacillus subtilis (strain 168).